Reading from the N-terminus, the 195-residue chain is Triosephosphate isomerase, cytosolic (195 aa).

His37 (electrophile) is an active-site residue. Catalysis depends on Glu107, which acts as the Proton acceptor.

This sequence belongs to the triosephosphate isomerase family. In terms of assembly, homodimer.

It is found in the cytoplasm. The enzyme catalyses D-glyceraldehyde 3-phosphate = dihydroxyacetone phosphate. It participates in carbohydrate biosynthesis; gluconeogenesis. Its pathway is carbohydrate degradation; glycolysis; D-glyceraldehyde 3-phosphate from glycerone phosphate: step 1/1. The protein is Triosephosphate isomerase, cytosolic of Lactuca sativa (Garden lettuce).